We begin with the raw amino-acid sequence, 451 residues long: Phosphoglucosamine mutase (451 aa).

Ser-101 (phosphoserine intermediate) is an active-site residue. Mg(2+) contacts are provided by Ser-101, Asp-240, Asp-242, and Asp-244. Ser-101 is modified (phosphoserine).

The protein belongs to the phosphohexose mutase family. Mg(2+) serves as cofactor. Activated by phosphorylation.

The catalysed reaction is alpha-D-glucosamine 1-phosphate = D-glucosamine 6-phosphate. Its function is as follows. Catalyzes the conversion of glucosamine-6-phosphate to glucosamine-1-phosphate. This chain is Phosphoglucosamine mutase, found in Nitrosococcus oceani (strain ATCC 19707 / BCRC 17464 / JCM 30415 / NCIMB 11848 / C-107).